A 123-amino-acid chain; its full sequence is Ribonuclease P protein component 2 (123 aa).

The protein belongs to the eukaryotic/archaeal RNase P protein component 2 family. In terms of assembly, consists of a catalytic RNA component and at least 4 protein subunits.

It catalyses the reaction Endonucleolytic cleavage of RNA, removing 5'-extranucleotides from tRNA precursor.. In terms of biological role, part of ribonuclease P, a protein complex that generates mature tRNA molecules by cleaving their 5'-ends. In Aeropyrum pernix (strain ATCC 700893 / DSM 11879 / JCM 9820 / NBRC 100138 / K1), this protein is Ribonuclease P protein component 2.